Reading from the N-terminus, the 160-residue chain is Major pollen allergen Car b 1 isoforms 1A and 1B (160 aa).

This sequence belongs to the BetVI family.

The chain is Major pollen allergen Car b 1 isoforms 1A and 1B from Carpinus betulus (European hornbeam).